Consider the following 21-residue polypeptide: Dart gland peptide (21 aa).

Positions 1–21 (SINNTGGSGNRRLDKNGFAGQ) are disordered. N-linked (GlcNAc...) asparagine glycosylation is present at Asn-3.

The protein localises to the secreted. This is Dart gland peptide from Cornu aspersum (Brown garden snail).